A 105-amino-acid chain; its full sequence is MTSVDFSKGLVPTIILDDQNGDVLMLAYMNEESYQKTLETGYTWFFSRSRNELWNKGATSGHTQKVKQIWTDCDNDTLLIRVTQIGPACHTGKKSCFFNLIKEDF.

D72 provides a ligand contact to Mg(2+). C73 is a binding site for Zn(2+). Mg(2+) contacts are provided by D74 and D76. Zn(2+)-binding residues include C89 and C96.

It belongs to the PRA-CH family. In terms of assembly, homodimer. Requires Mg(2+) as cofactor. Zn(2+) serves as cofactor.

The protein resides in the cytoplasm. The catalysed reaction is 1-(5-phospho-beta-D-ribosyl)-5'-AMP + H2O = 1-(5-phospho-beta-D-ribosyl)-5-[(5-phospho-beta-D-ribosylamino)methylideneamino]imidazole-4-carboxamide. The protein operates within amino-acid biosynthesis; L-histidine biosynthesis; L-histidine from 5-phospho-alpha-D-ribose 1-diphosphate: step 3/9. Catalyzes the hydrolysis of the adenine ring of phosphoribosyl-AMP. The polypeptide is Phosphoribosyl-AMP cyclohydrolase (Listeria monocytogenes serotype 4b (strain CLIP80459)).